The chain runs to 266 residues: Glucosamine-6-phosphate deaminase (266 aa).

The Proton acceptor; for enolization step role is filled by D72. D141 (for ring-opening step) is an active-site residue. The active-site Proton acceptor; for ring-opening step is H143. E148 serves as the catalytic For ring-opening step.

Belongs to the glucosamine/galactosamine-6-phosphate isomerase family. NagB subfamily. As to quaternary structure, homohexamer.

The catalysed reaction is alpha-D-glucosamine 6-phosphate + H2O = beta-D-fructose 6-phosphate + NH4(+). It participates in amino-sugar metabolism; N-acetylneuraminate degradation; D-fructose 6-phosphate from N-acetylneuraminate: step 5/5. Its activity is regulated as follows. Allosterically activated by N-acetylglucosamine 6-phosphate (GlcNAc6P). Catalyzes the reversible isomerization-deamination of glucosamine 6-phosphate (GlcN6P) to form fructose 6-phosphate (Fru6P) and ammonium ion. This is Glucosamine-6-phosphate deaminase from Citrobacter koseri (strain ATCC BAA-895 / CDC 4225-83 / SGSC4696).